Here is a 37-residue protein sequence, read N- to C-terminus: Photosystem II reaction center protein T (37 aa).

Residues 3–23 (ALVYTFLLVGTLGIIFFAIFF) traverse the membrane as a helical segment.

This sequence belongs to the PsbT family. As to quaternary structure, PSII is composed of 1 copy each of membrane proteins PsbA, PsbB, PsbC, PsbD, PsbE, PsbF, PsbH, PsbI, PsbJ, PsbK, PsbL, PsbM, PsbT, PsbY, PsbZ, Psb30/Ycf12, at least 3 peripheral proteins of the oxygen-evolving complex and a large number of cofactors. It forms dimeric complexes.

It is found in the plastid. Its subcellular location is the chloroplast thylakoid membrane. Found at the monomer-monomer interface of the photosystem II (PS II) dimer, plays a role in assembly and dimerization of PSII. PSII is a light-driven water plastoquinone oxidoreductase, using light energy to abstract electrons from H(2)O, generating a proton gradient subsequently used for ATP formation. This chain is Photosystem II reaction center protein T, found in Spirogyra maxima (Green alga).